A 293-amino-acid polypeptide reads, in one-letter code: Ribonuclease H2 subunit B (293 aa).

The tract at residues 251-278 (KRPQNSDITSSLLKKPNRKQATKKSKYF) is disordered. Residues 265 to 276 (KPNRKQATKKSK) are compositionally biased toward basic residues.

It belongs to the RNase H2 subunit B family. Component of the RNase H2 complex.

The protein resides in the nucleus. Its subcellular location is the cytoplasm. Functionally, non catalytic subunit of RNase H2, an endonuclease that specifically degrades the RNA of RNA:DNA hybrids. Participates in DNA replication, possibly by mediating the removal of lagging-strand Okazaki fragment RNA primers during DNA replication. Mediates the excision of single ribonucleotides from DNA:RNA duplexes. This chain is Ribonuclease H2 subunit B (rnh202), found in Schizosaccharomyces pombe (strain 972 / ATCC 24843) (Fission yeast).